Consider the following 672-residue polypeptide: Iron-phytosiderophore transporter YSL15 (672 aa).

Positions Met-1–Val-11 are enriched in basic and acidic residues. The interval Met-1 to Pro-27 is disordered. 14 consecutive transmembrane segments (helical) span residues Gly-47–Leu-67, Gly-70–Trp-90, Cys-115–Leu-135, Gly-158–Ile-178, Leu-218–Tyr-238, Leu-279–Ile-299, Phe-325–Val-345, Met-390–Phe-410, Val-418–Leu-438, Ile-450–Val-470, Val-504–Phe-524, Ile-556–Leu-576, Phe-602–Trp-622, and Ala-630–Phe-650.

This sequence belongs to the YSL (TC 2.A.67.2) family. As to expression, expressed in root phloem and at low levels in the shoot companion cells.

It is found in the cell membrane. Its function is as follows. Involved in Fe(3+) uptake from the rhizosphere and phloem transport of iron. Plays an important role in iron homeostasis during the early stages of growth. Transports Fe(3+)-phytosiderophore, but not Fe(3+)- or Fe(2+)-nicotianamine. May not transport other chelated metals. This chain is Iron-phytosiderophore transporter YSL15 (YSL15), found in Oryza sativa subsp. japonica (Rice).